Here is a 522-residue protein sequence, read N- to C-terminus: Cytochrome P450 monooxygenase FGSG_08207 (522 aa).

The chain crosses the membrane as a helical span at residues 10-30; the sequence is LLLSKPVVLGLAACALLFLIG. Residues asparagine 104 and asparagine 155 are each glycosylated (N-linked (GlcNAc...) asparagine). Cysteine 441 provides a ligand contact to heme.

It belongs to the cytochrome P450 family. Heme is required as a cofactor.

The protein localises to the membrane. Its pathway is secondary metabolite biosynthesis. In terms of biological role, cytochrome P450 monooxygenase; part of the gene cluster that mediates the biosynthesis of the lipopeptide fusaristatin A. Fusaristatin A consists of a polyketide chain linked to three amino acid residues glutamine (Gln), dehydroalanine (dehydro-Ala), and beta-aminoisobutyric acid. The biosynthesis starts with formation of a linear polyketide chain by the highly reducing polyketide synthase PKS6. The gene cluster does not contain an acyl-CoA ligase or an acyl-transferase, and it is therefore predicted that the polyketide is transferred directly to the nonribosomal peptide synthetase NRPS7. Modules 1-3 from NRPS7 incorporate dehydro-Ala, Gln, and beta-aminoisobutyric acid in the compound, which is released by cyclization. The beta-aminoisobutyric acid units are most likely not freely available to the NRPS, but can be synthesized from thymine, which requires a dehydrogenase, a monooxygenase, and an aminotransferase. The fusaristatin A cluster contains a cytochrome P450 monooxygenase (FGSG_08207) and an aminotransferase (FGSG_17085), which theoretically can perform two of the enzymatic steps. The enzymes may however also be involved in biosynthesis of dehydroalanine or modification of the polyketide. The dehydro-Ala residue can be a result of cyclization, where serine is dehydrated. The last gene of the cluster encodes a protein with an A/B barrel domain found in variable enzymes, which hampers functional prediction. The sequence is that of Cytochrome P450 monooxygenase FGSG_08207 from Gibberella zeae (strain ATCC MYA-4620 / CBS 123657 / FGSC 9075 / NRRL 31084 / PH-1) (Wheat head blight fungus).